The following is a 560-amino-acid chain: Leiomodin-3 (560 aa).

The segment at 1–49 is interaction with tropomyosin alpha; that stretch reads MSEHSRNSDQEELLDEEINEDEILANLSAEELKELQSEMEVMAPDPSLP. Residues 16 to 42 adopt a coiled-coil conformation; that stretch reads EEINEDEILANLSAEELKELQSEMEVM. Disordered regions lie at residues 45–68 and 127–217; these read DPSL…NFNH and IVAN…SKLD. Residues 142 to 167 are compositionally biased toward acidic residues; the sequence is ETDEEDEEEEDDDDDDEGEDDGEESE. Positions 168–182 are enriched in basic and acidic residues; sequence ETNREEEGKAKEQIR. Residues 183 to 192 show a composition bias toward polar residues; the sequence is NCENNCQQVT. A compositionally biased stretch (basic and acidic residues) spans 194-217; the sequence is KAFKEQRDRPEAQEQSEKKISKLD. Residues 386–425 adopt a coiled-coil conformation; the sequence is VTNLLTRNQDKQRQKRQEEQKQQQLKEQKKLIAMLENGLG. Disordered regions lie at residues 437–480 and 494–530; these read PKPD…KYRT and QRKS…PPLV. Residues 448–458 show a composition bias toward pro residues; that stretch reads QPPPPRPPNPQ. Positions 498–516 are enriched in basic and acidic residues; it reads RMPEAREPPEKTNLKDVIK. A WH2 domain is found at 534–553; that stretch reads PRDQLLNDIRHSSVAYLKPV.

The protein belongs to the tropomodulin family. May interact with tropomyosin alpha (TPM1/2) N-terminus. Interacts with KLHL40; leading to stabilization. In terms of processing, ubiquitinated, leading to its degradation. Interaction with KLHL40 negatively regulates ubiquitination and degradation. As to expression, expressed in cardiac and at higher levels in skeletal muscles (at protein level).

The protein localises to the cytoplasm. It localises to the myofibril. It is found in the sarcomere. The protein resides in the m line. Its subcellular location is the a band. The protein localises to the cytoskeleton. In terms of biological role, essential for the organization of sarcomeric actin thin filaments in skeletal muscle. Increases the rate of actin polymerization. This chain is Leiomodin-3 (LMOD3), found in Homo sapiens (Human).